A 172-amino-acid polypeptide reads, in one-letter code: Large ribosomal subunit protein uL10 (172 aa).

This sequence belongs to the universal ribosomal protein uL10 family. As to quaternary structure, part of the ribosomal stalk of the 50S ribosomal subunit. The N-terminus interacts with L11 and the large rRNA to form the base of the stalk. The C-terminus forms an elongated spine to which L12 dimers bind in a sequential fashion forming a multimeric L10(L12)X complex.

In terms of biological role, forms part of the ribosomal stalk, playing a central role in the interaction of the ribosome with GTP-bound translation factors. In Rhodopseudomonas palustris (strain TIE-1), this protein is Large ribosomal subunit protein uL10.